A 348-amino-acid chain; its full sequence is RNA 3'-terminal phosphate cyclase (348 aa).

ATP contacts are provided by residues glutamine 107 and histidine 290 to glutamine 294. The Tele-AMP-histidine intermediate role is filled by histidine 316.

Belongs to the RNA 3'-terminal cyclase family. Type 1 subfamily.

The protein localises to the cytoplasm. It carries out the reaction a 3'-end 3'-phospho-ribonucleotide-RNA + ATP = a 3'-end 2',3'-cyclophospho-ribonucleotide-RNA + AMP + diphosphate. In terms of biological role, catalyzes the conversion of 3'-phosphate to a 2',3'-cyclic phosphodiester at the end of RNA. The mechanism of action of the enzyme occurs in 3 steps: (A) adenylation of the enzyme by ATP; (B) transfer of adenylate to an RNA-N3'P to produce RNA-N3'PP5'A; (C) and attack of the adjacent 2'-hydroxyl on the 3'-phosphorus in the diester linkage to produce the cyclic end product. The biological role of this enzyme is unknown but it is likely to function in some aspects of cellular RNA processing. The chain is RNA 3'-terminal phosphate cyclase from Trichormus variabilis (strain ATCC 29413 / PCC 7937) (Anabaena variabilis).